The following is a 324-amino-acid chain: Methionyl-tRNA formyltransferase (324 aa).

114–117 (SLLP) contacts (6S)-5,6,7,8-tetrahydrofolate.

Belongs to the Fmt family.

The enzyme catalyses L-methionyl-tRNA(fMet) + (6R)-10-formyltetrahydrofolate = N-formyl-L-methionyl-tRNA(fMet) + (6S)-5,6,7,8-tetrahydrofolate + H(+). In terms of biological role, attaches a formyl group to the free amino group of methionyl-tRNA(fMet). The formyl group appears to play a dual role in the initiator identity of N-formylmethionyl-tRNA by promoting its recognition by IF2 and preventing the misappropriation of this tRNA by the elongation apparatus. The sequence is that of Methionyl-tRNA formyltransferase from Phocaeicola vulgatus (strain ATCC 8482 / DSM 1447 / JCM 5826 / CCUG 4940 / NBRC 14291 / NCTC 11154) (Bacteroides vulgatus).